The primary structure comprises 368 residues: MSILEKVQPIETMLPARYYTMSTEDMEKRVREIKEKMGKMLCIPCHHYQKDEVVQFSDAIGDSLQLAQVAARNKEAKYIVFCGVHFMAETADMLTTDEQVVILPDMRAGCSMADMADIEQTERAWRELTTLFGDTMIPLTYVNSTAAIKAFCGRNGGATVTSSNAKKMVSWAFTQKERLVFLPDQHLGRNTAYDLGIELNQMAVWNPNTDSLEYSGNLEDIKVILWKGHCSVHQNFTVKNIESLRKSHPNMNIIVHPECCYEVVQASDYAGSTKYIIDTIEQAPSSSKWAIGTEMNLVNRLIQKHSDKEIISLNPFMCPCLTMNRIDLPHLLWALESIERGEQVNVIQVDKQVTKDAVLALNRMLERV.

Iminosuccinate is bound by residues His46 and Ser63. Cys110 is a binding site for [4Fe-4S] cluster. Residues 141-143 and Ser162 contribute to the iminosuccinate site; that span reads YVN. Cys230 serves as a coordination point for [4Fe-4S] cluster. Iminosuccinate-binding positions include 256–258 and Thr273; that span reads HPE. Cys320 is a binding site for [4Fe-4S] cluster.

Belongs to the quinolinate synthase family. Type 3 subfamily. The cofactor is [4Fe-4S] cluster.

It is found in the cytoplasm. The enzyme catalyses iminosuccinate + dihydroxyacetone phosphate = quinolinate + phosphate + 2 H2O + H(+). The protein operates within cofactor biosynthesis; NAD(+) biosynthesis; quinolinate from iminoaspartate: step 1/1. Functionally, catalyzes the condensation of iminoaspartate with dihydroxyacetone phosphate to form quinolinate. This Bacillus cytotoxicus (strain DSM 22905 / CIP 110041 / 391-98 / NVH 391-98) protein is Quinolinate synthase.